The sequence spans 493 residues: MSSSANSLNALSFDNSYARLPTHFYQKVAQTPLEDAHLISFNGDVAEALGLNRSQLDPEELARYCGGGGALETGESIAMKYAGHQFGHYNPDLGDGRGLLLGEVVTADNRRLDLHLKGAGRTAYSRFGDGRAVLRSSIREYLVSAAMNSLGVSSTSALCLVGSEEYTMRNGMEPCAMVLRVTPCHIRFGHFEHFYYLGQHDDLKLLADYCIERYFPQLQEADNPYLAMFNEVRNRTADLVAQWQSYGFVHGVMNTDNMSIIGETFDYGPFTFLDSYDPNFISNKNDTAGRYAFKQQPGIALWNLSALAQALLPLIPLDDLKRSLDDFADLYSAAFYGKMSQRLGLTQQGADGSLRQLIDDLLTLFAANNTDMNRFMRALSRYDGNESSLSFMSDLSCDSRGFSEWKARFCKHVDSSDVTLADRTQAMLQVNPEYILRNYMLEEAIREAHQGDYLPVQNLLKIVKNPFNAQPGAERYAEAPPDWAGAICLTCSS.

Residues G94, G96, R97, K117, D129, G130, R180, and R187 each coordinate ATP. Residue D256 is the Proton acceptor of the active site. Mg(2+) is bound by residues N257 and D266. Position 266 (D266) interacts with ATP.

The protein belongs to the SELO family. It depends on Mg(2+) as a cofactor. Requires Mn(2+) as cofactor.

It carries out the reaction L-seryl-[protein] + ATP = 3-O-(5'-adenylyl)-L-seryl-[protein] + diphosphate. The enzyme catalyses L-threonyl-[protein] + ATP = 3-O-(5'-adenylyl)-L-threonyl-[protein] + diphosphate. It catalyses the reaction L-tyrosyl-[protein] + ATP = O-(5'-adenylyl)-L-tyrosyl-[protein] + diphosphate. The catalysed reaction is L-histidyl-[protein] + UTP = N(tele)-(5'-uridylyl)-L-histidyl-[protein] + diphosphate. It carries out the reaction L-seryl-[protein] + UTP = O-(5'-uridylyl)-L-seryl-[protein] + diphosphate. The enzyme catalyses L-tyrosyl-[protein] + UTP = O-(5'-uridylyl)-L-tyrosyl-[protein] + diphosphate. Functionally, nucleotidyltransferase involved in the post-translational modification of proteins. It can catalyze the addition of adenosine monophosphate (AMP) or uridine monophosphate (UMP) to a protein, resulting in modifications known as AMPylation and UMPylation. In Hahella chejuensis (strain KCTC 2396), this protein is Protein nucleotidyltransferase YdiU.